A 341-amino-acid chain; its full sequence is Glycerol-3-phosphate dehydrogenase [NAD(P)+] (341 aa).

Residues Ser15, Trp16, Arg36, and Lys110 each contribute to the NADPH site. Positions 110, 139, and 141 each coordinate sn-glycerol 3-phosphate. Position 143 (Ala143) interacts with NADPH. 5 residues coordinate sn-glycerol 3-phosphate: Lys194, Asp247, Ser257, Arg258, and Asn259. Catalysis depends on Lys194, which acts as the Proton acceptor. Residue Arg258 coordinates NADPH. Positions 282 and 284 each coordinate NADPH.

The protein belongs to the NAD-dependent glycerol-3-phosphate dehydrogenase family.

The protein localises to the cytoplasm. It catalyses the reaction sn-glycerol 3-phosphate + NAD(+) = dihydroxyacetone phosphate + NADH + H(+). The catalysed reaction is sn-glycerol 3-phosphate + NADP(+) = dihydroxyacetone phosphate + NADPH + H(+). Its pathway is membrane lipid metabolism; glycerophospholipid metabolism. Catalyzes the reduction of the glycolytic intermediate dihydroxyacetone phosphate (DHAP) to sn-glycerol 3-phosphate (G3P), the key precursor for phospholipid synthesis. The sequence is that of Glycerol-3-phosphate dehydrogenase [NAD(P)+] from Xanthomonas oryzae pv. oryzae (strain MAFF 311018).